The following is a 586-amino-acid chain: uncharacterized protein (586 aa).

Disordered regions lie at residues 17-64 and 80-123; these read VRRT…ETEE and HSCS…GGAN. Over residues 28–37 the composition is skewed to polar residues; the sequence is PSTSGSIAWT. Low complexity-rich tracts occupy residues 38-52 and 80-91; these read SSESGSAHSSRVSSS and HSCSAATTSQQS. Positions 94-110 are enriched in basic and acidic residues; it reads QSKEHRIGGIKKEEKPI. Over residues 112–123 the composition is skewed to gly residues; that stretch reads MGGGSSENGGAN. 12 helical membrane-spanning segments follow: residues 151–171, 191–211, 218–238, 243–263, 283–303, 317–337, 375–395, 413–433, 441–461, 466–486, 513–533, and 536–556; these read WVILVIFMFLSGSNGAQWIQY, WTSMIYMLTYILFFIPAAWLL, LSVLLGALGNCVGAWIKLLST, FWVTFVGQTIVGASQMFTLGI, LGVFGNQLGIAVGFVLPPLIV, TLFLGSAVLNTSILALVICFF, FVILFITYGINTGVFYAISTL, YVGLLIVVAGMAGSVVGGFIL, LTTIMIYLFSFVGMLSFTLTI, MVLVFINAALLGFFMTGYLPI, IFGIALTWLMGIVMHGFGTFT, and IIMSSCLVVGTILTCFIREDL.

It belongs to the major facilitator superfamily. Feline leukemia virus subgroup C receptor (TC 2.A.1.28.1) family.

The protein resides in the membrane. This is an uncharacterized protein from Caenorhabditis elegans.